The following is a 154-amino-acid chain: Heat shock protein beta-3 (154 aa).

The segment at 48–71 (ARGAGTPQALAEDSASTEKPPGEG) is disordered. Residues 57–154 (LAEDSASTEK…VEVKDSLGTK (98 aa)) form the sHSP domain.

This sequence belongs to the small heat shock protein (HSP20) family.

It is found in the cytoplasm. It localises to the nucleus. Inhibitor of actin polymerization. This Mus musculus (Mouse) protein is Heat shock protein beta-3 (Hspb3).